The primary structure comprises 349 residues: Autophagy-related protein 3 (349 aa).

The flexible region stretch occupies residues 95 to 173 (ALVNDGDDFK…IRDSGADSKN (79 aa)). Cys-244 (glycyl thioester intermediate) is an active-site residue. A handle region region spans residues 248–325 (SVMKTLLDRA…DQEVAIRVDQ (78 aa)). The ATG8 interaction motif (AIM) motif lies at 306–309 (WEEV).

This sequence belongs to the ATG3 family. In terms of assembly, monomer. Interacts with ATG8 through an intermediate thioester bond between Cys-244 and the C-terminal Gly of ATG8. Interacts with the C-terminal region of the E1-like ATG7 enzyme. Also interacts with the ATG12-ATG5 conjugate.

The protein localises to the cytoplasm. E2 conjugating enzyme required for the cytoplasm to vacuole transport (Cvt) and autophagy. Required for selective autophagic degradation of the nucleus (nucleophagy) as well as for mitophagy which contributes to regulate mitochondrial quantity and quality by eliminating the mitochondria to a basal level to fulfill cellular energy requirements and preventing excess ROS production. Responsible for the E2-like covalent binding of phosphatidylethanolamine to the C-terminal Gly of ATG8. The ATG12-ATG5 conjugate plays a role of an E3 and promotes the transfer of ATG8 from ATG3 to phosphatidylethanolamine (PE). This step is required for the membrane association of ATG8. The formation of the ATG8-phosphatidylethanolamine conjugate is essential for autophagy and for the cytoplasm to vacuole transport (Cvt). The ATG8-PE conjugate mediates tethering between adjacent membranes and stimulates membrane hemifusion, leading to expansion of the autophagosomal membrane during autophagy. Autophagy is required for proper vegetative growth, asexual/sexual reproduction, and full virulence. Autophagy is particularly involved in the biosynthesis of deoxynivalenol (DON), an important virulence determinant. The chain is Autophagy-related protein 3 from Gibberella zeae (strain ATCC MYA-4620 / CBS 123657 / FGSC 9075 / NRRL 31084 / PH-1) (Wheat head blight fungus).